A 464-amino-acid polypeptide reads, in one-letter code: Cysteine--tRNA ligase (464 aa).

Position 29 (Cys29) interacts with Zn(2+). A 'HIGH' region motif is present at residues 31–41 (ATVQGDPHIGH). Residues Cys207, His232, and Glu236 each contribute to the Zn(2+) site. Positions 263-267 (KMSKS) match the 'KMSKS' region motif. Position 266 (Lys266) interacts with ATP.

It belongs to the class-I aminoacyl-tRNA synthetase family. In terms of assembly, monomer. It depends on Zn(2+) as a cofactor.

It is found in the cytoplasm. The enzyme catalyses tRNA(Cys) + L-cysteine + ATP = L-cysteinyl-tRNA(Cys) + AMP + diphosphate. This is Cysteine--tRNA ligase from Rhodococcus opacus (strain B4).